The primary structure comprises 121 residues: Large ribosomal subunit protein bL12 (121 aa).

It belongs to the bacterial ribosomal protein bL12 family. As to quaternary structure, homodimer. Part of the ribosomal stalk of the 50S ribosomal subunit. Forms a multimeric L10(L12)X complex, where L10 forms an elongated spine to which 2 to 4 L12 dimers bind in a sequential fashion. Binds GTP-bound translation factors.

Forms part of the ribosomal stalk which helps the ribosome interact with GTP-bound translation factors. Is thus essential for accurate translation. This is Large ribosomal subunit protein bL12 from Pseudomonas fluorescens (strain SBW25).